The sequence spans 92 residues: DNA-directed RNA polymerase subunit omega (92 aa).

Belongs to the RNA polymerase subunit omega family. The RNAP catalytic core consists of 2 alpha, 1 beta, 1 beta' and 1 omega subunit. When a sigma factor is associated with the core the holoenzyme is formed, which can initiate transcription.

The catalysed reaction is RNA(n) + a ribonucleoside 5'-triphosphate = RNA(n+1) + diphosphate. In terms of biological role, promotes RNA polymerase assembly. Latches the N- and C-terminal regions of the beta' subunit thereby facilitating its interaction with the beta and alpha subunits. This chain is DNA-directed RNA polymerase subunit omega, found in Shewanella amazonensis (strain ATCC BAA-1098 / SB2B).